We begin with the raw amino-acid sequence, 493 residues long: MAPALNANPTTKRDELSAPSASHKLGMSSMASRAAGGGLKLTGLPDLSDSAGTLSDIFGTPQMREIWSDQNRVACYLEIEAALAIVQADLGIIPKNAAHEIVEHCRVQEIDWALYKQKTELIGYPVLGIVQQLVANCKDGLGEYCHWGATTQDITDTATVMQIRQSLTLVKQRLDSIVSSLEHLAEQHRNVPMAARSNLKQAVPITFGFKMARFLATFRRHQQRLVELEKRVYTLEFGGAAGNLSSLGDQGIATHDALAKMLDLAPAEIAWHTEHDRFAEVGTFLGLLTGTLAKLATDIKLMSQTEVGEVGEPFISNRGSSSTMPQKNNPISCVYIHACAANVRQGAAALLDAMQSDHERGTGPWEIIWVQLPLMMNWTSAALNNADFVLRGLQVFPDAMQHNLDLSKGLIVSEAVMMGLGNTLGRQYAHDAVYECCRTAFVQDRPLLDVLLENHEIASKLDRTELEKLCDPANYLGQCSQWIDRVLSRPSSA.

The tract at residues 1-22 is disordered; that stretch reads MAPALNANPTTKRDELSAPSAS.

It belongs to the class-II fumarase/aspartase family.

It is found in the cytoplasm. Its subcellular location is the cytosol. The protein localises to the nucleus. It carries out the reaction trans-aconitate + H(+) = itaconate + CO2. It functions in the pathway secondary metabolite biosynthesis. Functionally, trans-aconitate decarboxylase; part of the gene cluster that mediates the biosynthesis of itaconic acid and 2-hydroxyparaconate. Cis-aconitate is secreted by the mitochondrial tricarboxylate transporter MTT1. In the cytosol cis-aconitate is converted into trans-aconitate via isomerization by the aconitate-delta-isomerase ADI1. Decarboxylation of trans-aconitate by the trans-aconitate decarboxylase TAD1 then leads then to the production of itaconic acid. The cytochrome P450 monooxygenase CYP3 further converts itaconate to 2-hydroxyparaconate via oxidation of the double bond, leading to a transient epoxide, which can subsequently be lactonized to produce 2-hydroxyparaconate. Secretion of itaconate and possibly 2-hydroxyparaconate into the medium is mediated by the major facilitator ITP1. The glyoxalase domain-containing protein RDO1 is not involved in the biosynthesis of itaconate and 2-hydroxyparaconate, however, it might play a role in the further conversion of 2-hydroxyparaconate to itatartarate. The protein is Trans-aconitate decarboxylase 1 of Mycosarcoma maydis (Corn smut fungus).